A 64-amino-acid polypeptide reads, in one-letter code: Large ribosomal subunit protein bL35 (64 aa).

Positions 1–27 (MPKMKTKSGAKKRFKPTASGFKHKHAF) are disordered.

Belongs to the bacterial ribosomal protein bL35 family.

In Azotobacter vinelandii (strain DJ / ATCC BAA-1303), this protein is Large ribosomal subunit protein bL35.